A 345-amino-acid polypeptide reads, in one-letter code: Uroporphyrinogen decarboxylase (345 aa).

Substrate-binding positions include 27–31 (RQAGR), Phe-46, Asp-76, Tyr-152, Ser-207, and His-321.

Belongs to the uroporphyrinogen decarboxylase family. As to quaternary structure, homodimer.

Its subcellular location is the cytoplasm. It carries out the reaction uroporphyrinogen III + 4 H(+) = coproporphyrinogen III + 4 CO2. Its pathway is porphyrin-containing compound metabolism; protoporphyrin-IX biosynthesis; coproporphyrinogen-III from 5-aminolevulinate: step 4/4. Its function is as follows. Catalyzes the decarboxylation of four acetate groups of uroporphyrinogen-III to yield coproporphyrinogen-III. The protein is Uroporphyrinogen decarboxylase of Staphylococcus aureus (strain MRSA252).